The following is a 471-amino-acid chain: Pachytene checkpoint protein 2 homolog (471 aa).

Position 213–220 (213–220 (GPPGTGKT)) interacts with ATP.

Belongs to the AAA ATPase family. PCH2 subfamily.

Its function is as follows. Plays a key role in chromosome recombination during meiosis. This chain is Pachytene checkpoint protein 2 homolog, found in Oryza sativa subsp. indica (Rice).